The following is a 204-amino-acid chain: Phosphoribosyl-dephospho-CoA transferase (204 aa).

Active-site residues include Asp129 and Asp131.

It belongs to the MdcG family.

It catalyses the reaction apo-[malonate decarboxylase ACP] + 2'-(5''-triphospho-alpha-D-ribosyl)-3'-dephospho-CoA = holo-[malonate decarboxylase ACP] + diphosphate. Transfers 2'-(5-triphosphoribosyl)-3'-dephosphocoenzyme-A to the apo-[acyl-carrier-protein] of the malonate decarboxylase to yield holo-[acyl-carrier-protein]. This Pseudomonas putida (strain GB-1) protein is Phosphoribosyl-dephospho-CoA transferase.